The following is a 405-amino-acid chain: L-carnitine CoA-transferase (405 aa).

CoA contacts are provided by lysine 97 and arginine 104. Aspartate 169 acts as the Nucleophile in catalysis.

It belongs to the CoA-transferase III family. CaiB subfamily. As to quaternary structure, homodimer.

It is found in the cytoplasm. The enzyme catalyses crotonobetainyl-CoA + (R)-carnitine = crotonobetaine + (R)-carnitinyl-CoA. It catalyses the reaction 4-(trimethylamino)butanoyl-CoA + (R)-carnitine = (R)-carnitinyl-CoA + 4-(trimethylamino)butanoate. The protein operates within amine and polyamine metabolism; carnitine metabolism. Functionally, catalyzes the reversible transfer of the CoA moiety from gamma-butyrobetainyl-CoA to L-carnitine to generate L-carnitinyl-CoA and gamma-butyrobetaine. Is also able to catalyze the reversible transfer of the CoA moiety from gamma-butyrobetainyl-CoA or L-carnitinyl-CoA to crotonobetaine to generate crotonobetainyl-CoA. This chain is L-carnitine CoA-transferase, found in Escherichia coli O6:K15:H31 (strain 536 / UPEC).